The primary structure comprises 462 residues: Kinetochore protein Nuf2-B (462 aa).

The stretch at 143 to 462 (SGYKSALENV…AELNRRLSRQ (320 aa)) forms a coiled coil. Positions 236-259 (EQERMKSQIVESPEQRKSKTERMK) are disordered. Residues 248-259 (PEQRKSKTERMK) are compositionally biased toward basic and acidic residues.

This sequence belongs to the NUF2 family. As to quaternary structure, component of the NDC80 complex, which is composed of ndc80, cdca1, spbc24 and spbc25. The NDC80 complex interacts with mis12 and zwint.

The protein resides in the nucleus. It localises to the chromosome. Its subcellular location is the centromere. The protein localises to the kinetochore. Acts as a component of the essential kinetochore-associated NDC80 complex, which is required for chromosome segregation and spindle checkpoint activity. Required for kinetochore integrity and the organization of stable microtubule binding sites in the outer plate of the kinetochore. The NDC80 complex synergistically enhances the affinity of the SKA1 complex for microtubules and may allow the NDC80 complex to track depolymerizing microtubules. The protein is Kinetochore protein Nuf2-B (nuf2-b) of Xenopus laevis (African clawed frog).